Consider the following 196-residue polypeptide: 7-methyl-GTP pyrophosphatase (196 aa).

Aspartate 72 functions as the Proton acceptor in the catalytic mechanism.

The protein belongs to the Maf family. YceF subfamily. A divalent metal cation is required as a cofactor.

Its subcellular location is the cytoplasm. The catalysed reaction is N(7)-methyl-GTP + H2O = N(7)-methyl-GMP + diphosphate + H(+). Its function is as follows. Nucleoside triphosphate pyrophosphatase that hydrolyzes 7-methyl-GTP (m(7)GTP). May have a dual role in cell division arrest and in preventing the incorporation of modified nucleotides into cellular nucleic acids. The protein is 7-methyl-GTP pyrophosphatase of Neisseria gonorrhoeae (strain ATCC 700825 / FA 1090).